The sequence spans 379 residues: Cytochrome b (379 aa).

Transmembrane regions (helical) follow at residues 33–53 (FGSLLGVCLMIQILTGLFLAM), 77–98 (WLIRYLHANGASMFFICLFIHV), 113–133 (WNIGIILFLTTMATAFVGYVL), and 178–198 (FFAFHFILPFIITAFALVHLL). Heme b is bound by residues histidine 83 and histidine 97. Positions 182 and 196 each coordinate heme b. Histidine 201 contacts a ubiquinone. 4 consecutive transmembrane segments (helical) span residues 226-246 (IKDLLGIFLLLLALMILALFF), 288-308 (LGGVLALILSILILAIFPLLN), 320-340 (ITQTIYWTFIANLLVLTWIGG), and 347-367 (FTTIGQIASITYFTXIIILMP).

The protein belongs to the cytochrome b family. In terms of assembly, the cytochrome bc1 complex contains 11 subunits: 3 respiratory subunits (MT-CYB, CYC1 and UQCRFS1), 2 core proteins (UQCRC1 and UQCRC2) and 6 low-molecular weight proteins (UQCRH/QCR6, UQCRB/QCR7, UQCRQ/QCR8, UQCR10/QCR9, UQCR11/QCR10 and a cleavage product of UQCRFS1). This cytochrome bc1 complex then forms a dimer. It depends on heme b as a cofactor.

Its subcellular location is the mitochondrion inner membrane. Its function is as follows. Component of the ubiquinol-cytochrome c reductase complex (complex III or cytochrome b-c1 complex) that is part of the mitochondrial respiratory chain. The b-c1 complex mediates electron transfer from ubiquinol to cytochrome c. Contributes to the generation of a proton gradient across the mitochondrial membrane that is then used for ATP synthesis. The polypeptide is Cytochrome b (MT-CYB) (Akodon affinis (Colombian grass mouse)).